The chain runs to 237 residues: 2,3,4,5-tetrahydropyridine-2,6-dicarboxylate N-acetyltransferase (237 aa).

Belongs to the transferase hexapeptide repeat family. DapH subfamily.

It catalyses the reaction (S)-2,3,4,5-tetrahydrodipicolinate + acetyl-CoA + H2O = L-2-acetamido-6-oxoheptanedioate + CoA. Its pathway is amino-acid biosynthesis; L-lysine biosynthesis via DAP pathway; LL-2,6-diaminopimelate from (S)-tetrahydrodipicolinate (acetylase route): step 1/3. In terms of biological role, catalyzes the transfer of an acetyl group from acetyl-CoA to tetrahydrodipicolinate. The protein is 2,3,4,5-tetrahydropyridine-2,6-dicarboxylate N-acetyltransferase of Limosilactobacillus fermentum (strain NBRC 3956 / LMG 18251) (Lactobacillus fermentum).